The primary structure comprises 176 residues: Large ribosomal subunit protein uL10 (176 aa).

It belongs to the universal ribosomal protein uL10 family. Part of the ribosomal stalk of the 50S ribosomal subunit. The N-terminus interacts with L11 and the large rRNA to form the base of the stalk. The C-terminus forms an elongated spine to which L12 dimers bind in a sequential fashion forming a multimeric L10(L12)X complex.

Its function is as follows. Forms part of the ribosomal stalk, playing a central role in the interaction of the ribosome with GTP-bound translation factors. The protein is Large ribosomal subunit protein uL10 of Carboxydothermus hydrogenoformans (strain ATCC BAA-161 / DSM 6008 / Z-2901).